The chain runs to 148 residues: D-aminoacyl-tRNA deacylase (148 aa).

The short motif at 137–138 is the Gly-cisPro motif, important for rejection of L-amino acids element; the sequence is GP.

It belongs to the DTD family. In terms of assembly, homodimer.

It is found in the cytoplasm. The catalysed reaction is glycyl-tRNA(Ala) + H2O = tRNA(Ala) + glycine + H(+). It carries out the reaction a D-aminoacyl-tRNA + H2O = a tRNA + a D-alpha-amino acid + H(+). Functionally, an aminoacyl-tRNA editing enzyme that deacylates mischarged D-aminoacyl-tRNAs. Also deacylates mischarged glycyl-tRNA(Ala), protecting cells against glycine mischarging by AlaRS. Acts via tRNA-based rather than protein-based catalysis; rejects L-amino acids rather than detecting D-amino acids in the active site. By recycling D-aminoacyl-tRNA to D-amino acids and free tRNA molecules, this enzyme counteracts the toxicity associated with the formation of D-aminoacyl-tRNA entities in vivo and helps enforce protein L-homochirality. This Deinococcus geothermalis (strain DSM 11300 / CIP 105573 / AG-3a) protein is D-aminoacyl-tRNA deacylase.